The primary structure comprises 157 residues: NADPH-dependent 7-cyano-7-deazaguanine reductase (157 aa).

The active-site Thioimide intermediate is cysteine 56. Aspartate 63 serves as the catalytic Proton donor. Substrate contacts are provided by residues 78-80 (VES) and 97-98 (HE).

This sequence belongs to the GTP cyclohydrolase I family. QueF type 1 subfamily.

The protein localises to the cytoplasm. The catalysed reaction is 7-aminomethyl-7-carbaguanine + 2 NADP(+) = 7-cyano-7-deazaguanine + 2 NADPH + 3 H(+). The protein operates within tRNA modification; tRNA-queuosine biosynthesis. Its function is as follows. Catalyzes the NADPH-dependent reduction of 7-cyano-7-deazaguanine (preQ0) to 7-aminomethyl-7-deazaguanine (preQ1). The polypeptide is NADPH-dependent 7-cyano-7-deazaguanine reductase (Parabacteroides distasonis (strain ATCC 8503 / DSM 20701 / CIP 104284 / JCM 5825 / NCTC 11152)).